Here is a 378-residue protein sequence, read N- to C-terminus: Ribosomal RNA large subunit methyltransferase G (378 aa).

The protein belongs to the methyltransferase superfamily. RlmG family.

It is found in the cytoplasm. It carries out the reaction guanosine(1835) in 23S rRNA + S-adenosyl-L-methionine = N(2)-methylguanosine(1835) in 23S rRNA + S-adenosyl-L-homocysteine + H(+). Specifically methylates the guanine in position 1835 (m2G1835) of 23S rRNA. In Shigella flexneri, this protein is Ribosomal RNA large subunit methyltransferase G.